Reading from the N-terminus, the 437-residue chain is GTPase Der (437 aa).

2 consecutive EngA-type G domains span residues 4-167 and 176-352; these read PVVA…PDEA and IRFS…DNHR. GTP-binding positions include 10–17, 57–61, 119–122, 182–189, 230–234, and 295–298; these read GRPNVGKS, DTGGI, NKVD, DTAGM, and NKWD. One can recognise a KH-like domain in the interval 353–437; it reads KRISSSTLND…PIKLIVRARK (85 aa).

Belongs to the TRAFAC class TrmE-Era-EngA-EngB-Septin-like GTPase superfamily. EngA (Der) GTPase family. Associates with the 50S ribosomal subunit.

GTPase that plays an essential role in the late steps of ribosome biogenesis. The protein is GTPase Der of Leuconostoc citreum (strain KM20).